The chain runs to 40 residues: Photosystem II reaction center protein J (40 aa).

Residues 8-28 (IPLWLIGTVTGIIVIGLIGIF) traverse the membrane as a helical segment.

Belongs to the PsbJ family. PSII is composed of 1 copy each of membrane proteins PsbA, PsbB, PsbC, PsbD, PsbE, PsbF, PsbH, PsbI, PsbJ, PsbK, PsbL, PsbM, PsbT, PsbX, PsbY, PsbZ, Psb30/Ycf12, at least 3 peripheral proteins of the oxygen-evolving complex and a large number of cofactors. It forms dimeric complexes.

The protein localises to the plastid. Its subcellular location is the chloroplast thylakoid membrane. In terms of biological role, one of the components of the core complex of photosystem II (PSII). PSII is a light-driven water:plastoquinone oxidoreductase that uses light energy to abstract electrons from H(2)O, generating O(2) and a proton gradient subsequently used for ATP formation. It consists of a core antenna complex that captures photons, and an electron transfer chain that converts photonic excitation into a charge separation. The protein is Photosystem II reaction center protein J of Piper cenocladum (Ant piper).